The primary structure comprises 531 residues: MKNSVKSEIYRVLGRDFILEKPKDKNLAHYATPFAFSLAKEFKKSPAIIASQLALKFENHELFDVFSINGYLNFKLKGEFLNSLANNALSLAESFGSKKPQSQKDIFIEYISANPTGPLHIGHVRGAVYGDTLARVARYIGLDVFTEYYINDAGNQIDLLGISISLFAREALFNENVQYPDKYYRGEYIEDIAKLALGKFGKDIFYDESRNLELAEFGKDEVLKIIKKDLQDVGIFIESWASEKSLYDELEGTIKKLASSGQMYEKDQTTYIASTMLGDDSDRVVIRSDGRPTYLAGDIVYHDAKFKKGYKHYINIWGADHHGYIARIKAAINFLGYDESRLEVILMQMVSLLKEGKPFKMSKRAGTSVLMSDILSEIGSDALRFIFISKANTSSLEFDIDELKKEDSSNPIFYINYAHARVNQVFAKASKLPNDVVGADLSNLDESGKNLLFEALILPEVLEDAVTSRSLHKIPEYLKSLSASFHKFYNENRVVGSKNEDELLKLFSVVALSIKVALNLIGIKAKDKMEH.

The short motif at 113-123 (ANPTGPLHIGH) is the 'HIGH' region element.

Belongs to the class-I aminoacyl-tRNA synthetase family. In terms of assembly, monomer.

It localises to the cytoplasm. It carries out the reaction tRNA(Arg) + L-arginine + ATP = L-arginyl-tRNA(Arg) + AMP + diphosphate. The polypeptide is Arginine--tRNA ligase (Campylobacter fetus subsp. fetus (strain 82-40)).